A 185-amino-acid polypeptide reads, in one-letter code: Photosystem I assembly protein Ycf4 (185 aa).

2 consecutive transmembrane segments (helical) span residues N21–Y43 and F68–S90.

The protein belongs to the Ycf4 family.

The protein localises to the plastid. It localises to the chloroplast thylakoid membrane. Its function is as follows. Seems to be required for the assembly of the photosystem I complex. The protein is Photosystem I assembly protein Ycf4 of Aegilops tauschii (Tausch's goatgrass).